The chain runs to 266 residues: 4-hydroxy-tetrahydrodipicolinate reductase (266 aa).

Gly10 to Met15 is a binding site for NAD(+). Lys38 provides a ligand contact to NADP(+). Residues Gly99 to Thr101 and Ala125 to Phe128 contribute to the NAD(+) site. His155 acts as the Proton donor/acceptor in catalysis. (S)-2,3,4,5-tetrahydrodipicolinate is bound at residue His156. Residue Lys159 is the Proton donor of the active site. (S)-2,3,4,5-tetrahydrodipicolinate is bound at residue Gly165–Thr166.

This sequence belongs to the DapB family.

The protein localises to the cytoplasm. The catalysed reaction is (S)-2,3,4,5-tetrahydrodipicolinate + NAD(+) + H2O = (2S,4S)-4-hydroxy-2,3,4,5-tetrahydrodipicolinate + NADH + H(+). The enzyme catalyses (S)-2,3,4,5-tetrahydrodipicolinate + NADP(+) + H2O = (2S,4S)-4-hydroxy-2,3,4,5-tetrahydrodipicolinate + NADPH + H(+). It participates in amino-acid biosynthesis; L-lysine biosynthesis via DAP pathway; (S)-tetrahydrodipicolinate from L-aspartate: step 4/4. Its function is as follows. Catalyzes the conversion of 4-hydroxy-tetrahydrodipicolinate (HTPA) to tetrahydrodipicolinate. This chain is 4-hydroxy-tetrahydrodipicolinate reductase, found in Bacillus mycoides (strain KBAB4) (Bacillus weihenstephanensis).